The sequence spans 149 residues: MFSPQSRLRHAVADTFAMVVYCSVVNMLIEIFLSGMSVEQSLSSRLVAIPVNILIAWPYGVYRDLIMRVARKASPAGWAKNLADVLAYVTFQSPVYIIILLTVGADWHQIMAAVSSNIVVSMLMGAVYGYFLDYCRRLFKVSNYHQAKA.

The next 4 membrane-spanning stretches (helical) occupy residues 16–36, 46–66, 85–105, and 112–132; these read FAMV…LSGM, LVAI…RDLI, VLAY…TVGA, and AAVS…GYFL.

It belongs to the AlaE exporter family.

It is found in the cell inner membrane. Exports L-alanine. This chain is L-alanine exporter AlaE, found in Salmonella arizonae (strain ATCC BAA-731 / CDC346-86 / RSK2980).